The chain runs to 599 residues: Aspartate--tRNA(Asp/Asn) ligase (599 aa).

Glu-172 is an L-aspartate binding site. The aspartate stretch occupies residues 196–199; that stretch reads QLFK. Arg-218 contributes to the L-aspartate binding site. Residues 218 to 220 and Gln-227 contribute to the ATP site; that span reads RDE. His-454 provides a ligand contact to L-aspartate. Glu-488 provides a ligand contact to ATP. Arg-495 lines the L-aspartate pocket. 540–543 is a binding site for ATP; the sequence is GLDR.

The protein belongs to the class-II aminoacyl-tRNA synthetase family. Type 1 subfamily. In terms of assembly, homodimer.

The protein resides in the cytoplasm. The catalysed reaction is tRNA(Asx) + L-aspartate + ATP = L-aspartyl-tRNA(Asx) + AMP + diphosphate. In terms of biological role, aspartyl-tRNA synthetase with relaxed tRNA specificity since it is able to aspartylate not only its cognate tRNA(Asp) but also tRNA(Asn). Reaction proceeds in two steps: L-aspartate is first activated by ATP to form Asp-AMP and then transferred to the acceptor end of tRNA(Asp/Asn). The sequence is that of Aspartate--tRNA(Asp/Asn) ligase from Methylibium petroleiphilum (strain ATCC BAA-1232 / LMG 22953 / PM1).